An 87-amino-acid polypeptide reads, in one-letter code: Small ribosomal subunit protein eS21 (87 aa).

It belongs to the eukaryotic ribosomal protein eS21 family. Component of the small ribosomal subunit. Mature ribosomes consist of a small (40S) and a large (60S) subunit. The 40S subunit contains about 33 different proteins and 1 molecule of RNA (18S). The 60S subunit contains about 49 different proteins and 3 molecules of RNA (25S, 5.8S and 5S).

It localises to the cytoplasm. Functionally, required for the processing of the 20S rRNA-precursor to mature 18S rRNA in a late step of the maturation of 40S ribosomal subunits. Has a physiological role leading to 18S rRNA stability. In Candida albicans (Yeast), this protein is Small ribosomal subunit protein eS21 (RPS21).